We begin with the raw amino-acid sequence, 391 residues long: 3-ketoacyl-CoA thiolase (391 aa).

C95 functions as the Acyl-thioester intermediate in the catalytic mechanism. Active-site proton acceptor residues include H347 and C377.

Belongs to the thiolase-like superfamily. Thiolase family. Heterotetramer of two alpha chains (FadB) and two beta chains (FadA).

The protein localises to the cytoplasm. It carries out the reaction an acyl-CoA + acetyl-CoA = a 3-oxoacyl-CoA + CoA. Its pathway is lipid metabolism; fatty acid beta-oxidation. Its function is as follows. Catalyzes the final step of fatty acid oxidation in which acetyl-CoA is released and the CoA ester of a fatty acid two carbons shorter is formed. The chain is 3-ketoacyl-CoA thiolase from Pseudomonas putida (Arthrobacter siderocapsulatus).